The following is a 1027-amino-acid chain: 2-oxoglutarate dehydrogenase, mitochondrial (1027 aa).

Residues Arg315, Asp413, Asn446, Ile448, and Gln674 each coordinate thiamine diphosphate. Positions 413, 446, and 448 each coordinate Mg(2+).

It belongs to the alpha-ketoglutarate dehydrogenase family. Homodimer. Component of the 2-oxoglutarate dehydrogenase complex. Requires thiamine diphosphate as cofactor. The cofactor is Mg(2+).

It is found in the mitochondrion matrix. It catalyses the reaction N(6)-[(R)-lipoyl]-L-lysyl-[protein] + 2-oxoglutarate + H(+) = N(6)-[(R)-S(8)-succinyldihydrolipoyl]-L-lysyl-[protein] + CO2. The 2-oxoglutarate dehydrogenase complex catalyzes the overall conversion of 2-oxoglutarate to succinyl-CoA and CO(2). It contains multiple copies of three enzymatic components: 2-oxoglutarate dehydrogenase (E1), dihydrolipoamide succinyltransferase (E2) and lipoamide dehydrogenase (E3). This Caenorhabditis briggsae protein is 2-oxoglutarate dehydrogenase, mitochondrial (ogdh-1).